Consider the following 457-residue polypeptide: Peptidyl-prolyl cis-trans isomerase FKBP5 (457 aa).

Methionine 1 carries the post-translational modification N-acetylmethionine. Positions 1–26 (MTTDEGAKNNGESPTATVAEQGEDIT) are disordered. The residue at position 13 (serine 13) is a Phosphoserine. PPIase FKBP-type domains follow at residues 50 to 138 (GDKV…LDFK) and 165 to 251 (GATV…KSFE). TPR repeat units follow at residues 268-301 (AAIVKEKGTVYFKGGKYMQAVIQYGKIVSWLEME), 317-350 (LAAFLNLAMCYSKLREYTKAVECCDKALGLDSAN), and 351-384 (GKGLYRRGEAQLLMNEFESAKGDFEKVLEVNPQN). The disordered stretch occupies residues 420–457 (DAKEEANKAMGKKTSEGVTNEKGTDSQAMEEEKPEGHV). Serine 445 carries the phosphoserine modification.

Part of a heteromultimeric cytoplasmic complex with HSP90AA1, HSPA1A/HSPA1B and steroid receptors. Upon ligand binding dissociates from the complex and FKBP4 takes its place. Interacts with functionally mature heterooligomeric progesterone receptor complexes along with HSP90 and TEBP. Interacts with IFI44L; this interaction modulates the kinase activity of IKBKB and IKBKE. Interacts with IKBKB and IKBKE.

It is found in the cytoplasm. It localises to the nucleus. The catalysed reaction is [protein]-peptidylproline (omega=180) = [protein]-peptidylproline (omega=0). With respect to regulation, inhibited by FK506 but not cyclosporin. Immunophilin protein with PPIase and co-chaperone activities. Component of unligated steroid receptors heterocomplexes through interaction with heat-shock protein 90 (HSP90). Plays a role in the intracellular trafficking of heterooligomeric forms of steroid hormone receptors maintaining the complex into the cytoplasm when unliganded. Acts as a regulator of Akt/AKT1 activity by promoting the interaction between Akt/AKT1 and PHLPP1, thereby enhancing dephosphorylation and subsequent activation of Akt/AKT1. Interacts with IKBKE and IKBKB which facilitates IKK complex assembly leading to increased IKBKE and IKBKB kinase activity, NF-kappaB activation, and IFN production. In Pongo abelii (Sumatran orangutan), this protein is Peptidyl-prolyl cis-trans isomerase FKBP5 (FKBP5).